A 146-amino-acid chain; its full sequence is MSFWKNKTLAEMDTQEWESLCDGCGKCCLNKLIDDETEELYYTNAACKLLDPKDGHCVHYVQRFNFVPSCTQVTVDNVAELTWLPDSCAYRRLHLGRELPSWHPLITGSKEAMHIAGMSIKNKVTCETKVKYMEDHIVLWPLKDIE.

The protein belongs to the UPF0260 family.

The sequence is that of UPF0260 protein Ssed_2516 from Shewanella sediminis (strain HAW-EB3).